Reading from the N-terminus, the 431-residue chain is Asparagine--tRNA ligase (431 aa).

It belongs to the class-II aminoacyl-tRNA synthetase family.

It is found in the cytoplasm. It carries out the reaction tRNA(Asn) + L-asparagine + ATP = L-asparaginyl-tRNA(Asn) + AMP + diphosphate + H(+). This Thermococcus kodakarensis (strain ATCC BAA-918 / JCM 12380 / KOD1) (Pyrococcus kodakaraensis (strain KOD1)) protein is Asparagine--tRNA ligase.